We begin with the raw amino-acid sequence, 573 residues long: Excitatory amino acid transporter 2 (573 aa).

Residues 1–11 (MASTEGANNMP) show a composition bias toward polar residues. The segment at 1–29 (MASTEGANNMPKQVEVRMHDSHLSSEEPK) is disordered. The Cytoplasmic portion of the chain corresponds to 1 to 44 (MASTEGANNMPKQVEVRMHDSHLSSEEPKHRNLGMRMCDKLGKN). Residues serine 3, serine 21, serine 24, and serine 25 each carry the phosphoserine modification. A compositionally biased stretch (basic and acidic residues) spans 14–29 (VEVRMHDSHLSSEEPK). Residue cysteine 38 is the site of S-palmitoyl cysteine attachment. The next 3 helical transmembrane spans lie at 45 to 64 (LLLS…GGLL), 88 to 108 (MLKM…LSGL), and 121 to 142 (MVYY…VLAI). 2 N-linked (GlcNAc...) asparagine glycosylation sites follow: asparagine 205 and asparagine 215. Transmembrane regions (helical) follow at residues 235-258 (FKDG…MGKM), 268-295 (FFNI…ACLI), and 317-338 (ITVI…YFVV). The segment at residues 344 to 374 (FSFFAGIFQAWITALGTASSAGTLPVTFRCL) is an intramembrane region (discontinuously helical). L-aspartate is bound at residue 361–363 (ASS). Residues 384–410 (VTRFVLPVGATINMDGTALYEAVAAIF) traverse the membrane as a helical segment. Na(+)-binding residues include glycine 392, threonine 394, and asparagine 396. L-aspartate-binding positions include threonine 400, 441–445 (IPSAG), aspartate 474, and asparagine 481. The segment at residues 424–457 (IVTVSLTATLASIGAASIPSAGLVTMLLILTAVG) is an intramembrane region (discontinuously helical). A helical transmembrane segment spans residues 471–492 (WLLDRMRTSVNVVGDSFGAGIV). Asparagine 481 and aspartate 485 together coordinate Na(+). Phosphoserine occurs at positions 505, 520, 531, and 533. The residue at position 538 (tyrosine 538) is a Phosphotyrosine. Phosphoserine is present on residues serine 543, serine 559, and serine 563.

Belongs to the dicarboxylate/amino acid:cation symporter (DAACS) (TC 2.A.23) family. SLC1A2 subfamily. Homotrimer. Interacts with AJUBA. Glycosylated. In terms of processing, palmitoylation at Cys-38 is not required for correct subcellular localization, but is important for glutamate uptake activity. Localized in brain and is highly enriched in the Purkinje cell layer in cerebellum.

It localises to the cell membrane. It catalyses the reaction K(+)(in) + L-glutamate(out) + 3 Na(+)(out) + H(+)(out) = K(+)(out) + L-glutamate(in) + 3 Na(+)(in) + H(+)(in). The enzyme catalyses D-aspartate(out) + K(+)(in) + 3 Na(+)(out) + H(+)(out) = D-aspartate(in) + K(+)(out) + 3 Na(+)(in) + H(+)(in). The catalysed reaction is K(+)(in) + L-aspartate(out) + 3 Na(+)(out) + H(+)(out) = K(+)(out) + L-aspartate(in) + 3 Na(+)(in) + H(+)(in). Sodium-dependent, high-affinity amino acid transporter that mediates the uptake of L-glutamate and also L-aspartate and D-aspartate. Functions as a symporter that transports one amino acid molecule together with two or three Na(+) ions and one proton, in parallel with the counter-transport of one K(+) ion. Mediates Cl(-) flux that is not coupled to amino acid transport; this avoids the accumulation of negative charges due to aspartate and Na(+) symport. Essential for the rapid removal of released glutamate from the synaptic cleft, and for terminating the postsynaptic action of glutamate. This is Excitatory amino acid transporter 2 (Slc1a2) from Rattus norvegicus (Rat).